The chain runs to 393 residues: MTVSDRWLLPDGVEDILPPLAGRIESLRRDVMDTCQRWGYQLVIPPLIEYLESLFTGTGHDLELQTFKLTDQLTGRMMGVRADMTPQAARIDAHTLGQDGITRLCYAGHVLHTRPRHMLTGRTPIQAGCELFGSGSEAADMEVISLMLETLRVAGLPRLHLDLAHVSIYESLVSDAGFDRDTEAAVFDAMARKSVPELDRLLGECVPGSAGFRLRQLARVSGGVESLADAREILSGASGAIDAALDQLARVADMLNRDFPEVSLGFDFCELRGYNYHTGLVFAAYVPGHGDAVAKGGRYDAIGSDFGRARPATGFSLDIRALVSLGERPFRKAGAIWAPADNDARLEGVISGLRMTETVIRALPDDRETDPSERGCDRQLVNRDGQWVVETIA.

It belongs to the class-II aminoacyl-tRNA synthetase family. HisZ subfamily. In terms of assembly, heteromultimer composed of HisG and HisZ subunits.

It localises to the cytoplasm. It participates in amino-acid biosynthesis; L-histidine biosynthesis; L-histidine from 5-phospho-alpha-D-ribose 1-diphosphate: step 1/9. Its function is as follows. Required for the first step of histidine biosynthesis. May allow the feedback regulation of ATP phosphoribosyltransferase activity by histidine. This is ATP phosphoribosyltransferase regulatory subunit from Marinobacter nauticus (strain ATCC 700491 / DSM 11845 / VT8) (Marinobacter aquaeolei).